The primary structure comprises 471 residues: Cell division protein FtsP (471 aa).

Residues 1–27 (MSLNRRQFIQASGLALCAGMTPLAAKA) constitute a signal peptide (tat-type signal). In terms of domain architecture, Plastocyanin-like spans 229–287 (VRLRLLNASNSRRYVMRLSDGRAMNVIASDQGLLPAPMAVNQLSLAPGERREILIDMSQ).

This sequence belongs to the FtsP family. In terms of processing, predicted to be exported by the Tat system. The position of the signal peptide cleavage has not been experimentally proven.

The protein localises to the periplasm. Functionally, cell division protein that is required for growth during stress conditions. May be involved in protecting or stabilizing the divisomal assembly under conditions of stress. The sequence is that of Cell division protein FtsP from Pectobacterium atrosepticum (strain SCRI 1043 / ATCC BAA-672) (Erwinia carotovora subsp. atroseptica).